Reading from the N-terminus, the 812-residue chain is Valine--tRNA ligase (812 aa).

The 'HIGH' region signature appears at 46 to 56; it reads PTVSGQLHIGH. Positions 536–540 match the 'KMSKS' region motif; it reads KMSKS. Lys-539 is an ATP binding site.

This sequence belongs to the class-I aminoacyl-tRNA synthetase family. ValS type 2 subfamily. As to quaternary structure, monomer.

Its subcellular location is the cytoplasm. It carries out the reaction tRNA(Val) + L-valine + ATP = L-valyl-tRNA(Val) + AMP + diphosphate. Functionally, catalyzes the attachment of valine to tRNA(Val). As ValRS can inadvertently accommodate and process structurally similar amino acids such as threonine, to avoid such errors, it has a 'posttransfer' editing activity that hydrolyzes mischarged Thr-tRNA(Val) in a tRNA-dependent manner. This chain is Valine--tRNA ligase, found in Rickettsia akari (strain Hartford).